An 89-amino-acid chain; its full sequence is Small ribosomal subunit protein uS15 (89 aa).

This sequence belongs to the universal ribosomal protein uS15 family. As to quaternary structure, part of the 30S ribosomal subunit. Forms a bridge to the 50S subunit in the 70S ribosome, contacting the 23S rRNA.

In terms of biological role, one of the primary rRNA binding proteins, it binds directly to 16S rRNA where it helps nucleate assembly of the platform of the 30S subunit by binding and bridging several RNA helices of the 16S rRNA. Functionally, forms an intersubunit bridge (bridge B4) with the 23S rRNA of the 50S subunit in the ribosome. This chain is Small ribosomal subunit protein uS15, found in Carboxydothermus hydrogenoformans (strain ATCC BAA-161 / DSM 6008 / Z-2901).